The primary structure comprises 248 residues: ATP synthase subunit a, chloroplastic (248 aa).

The next 5 helical transmembrane spans lie at 37–57 (GQVLITSWVVIGILLTVAFLG), 96–116 (VPFVGTLFLFIFVSNWSGALV), 135–155 (INTTVALALLTSGAYFYAGFH), 200–220 (LVVAVLVSLVPLVVPIPMMFL), and 221–241 (GLFTSGIQALIFATLAAAYIG).

The protein belongs to the ATPase A chain family. As to quaternary structure, F-type ATPases have 2 components, CF(1) - the catalytic core - and CF(0) - the membrane proton channel. CF(1) has five subunits: alpha(3), beta(3), gamma(1), delta(1), epsilon(1). CF(0) has four main subunits: a, b, b' and c.

The protein localises to the plastid. It is found in the chloroplast thylakoid membrane. Key component of the proton channel; it plays a direct role in the translocation of protons across the membrane. This is ATP synthase subunit a, chloroplastic from Staurastrum punctulatum (Green alga).